The following is a 260-amino-acid chain: 3-methyl-2-oxobutanoate hydroxymethyltransferase (260 aa).

Mg(2+) is bound by residues Asp44 and Asp83. Residues 44–45 (DS), Asp83, and Lys113 each bind 3-methyl-2-oxobutanoate. Glu115 serves as a coordination point for Mg(2+). Glu183 acts as the Proton acceptor in catalysis.

The protein belongs to the PanB family. Homodecamer; pentamer of dimers. Mg(2+) serves as cofactor.

The protein resides in the cytoplasm. The enzyme catalyses 3-methyl-2-oxobutanoate + (6R)-5,10-methylene-5,6,7,8-tetrahydrofolate + H2O = 2-dehydropantoate + (6S)-5,6,7,8-tetrahydrofolate. It participates in cofactor biosynthesis; (R)-pantothenate biosynthesis; (R)-pantoate from 3-methyl-2-oxobutanoate: step 1/2. Its function is as follows. Catalyzes the reversible reaction in which hydroxymethyl group from 5,10-methylenetetrahydrofolate is transferred onto alpha-ketoisovalerate to form ketopantoate. The chain is 3-methyl-2-oxobutanoate hydroxymethyltransferase from Gloeobacter violaceus (strain ATCC 29082 / PCC 7421).